A 100-amino-acid polypeptide reads, in one-letter code: Large ribosomal subunit protein bL21 (100 aa).

It belongs to the bacterial ribosomal protein bL21 family. As to quaternary structure, part of the 50S ribosomal subunit. Contacts protein L20.

Its function is as follows. This protein binds to 23S rRNA in the presence of protein L20. The protein is Large ribosomal subunit protein bL21 of Wolbachia pipientis subsp. Culex pipiens (strain wPip).